Reading from the N-terminus, the 228-residue chain is MEGLTDRQLEVLRFIASQIEDHGYPPTIREIGEALDIRSTNGVNDHLKALERKGYLSRDPVKSRALIPTSAAREALGGGETGSNVVPLVRGPARPGSRMIEIPIVGRVAAGMPILAQERVEDTVQVDAFLLGTNKKVYGLRVQGDSMIGDGILPGDYVFVKKQLNADDGEIVVAMIDDEATVKRVYFEGDRVRFQPSNPRMAPIYVRHSDFRSTMILGVVVGVYRKLT.

The H-T-H motif DNA-binding region spans 28-48 (IREIGEALDIRSTNGVNDHLK). Catalysis depends on for autocatalytic cleavage activity residues Ser146 and Lys183.

Belongs to the peptidase S24 family. Homodimer.

The enzyme catalyses Hydrolysis of Ala-|-Gly bond in repressor LexA.. Its function is as follows. Represses a number of genes involved in the response to DNA damage (SOS response), including recA and lexA. In the presence of single-stranded DNA, RecA interacts with LexA causing an autocatalytic cleavage which disrupts the DNA-binding part of LexA, leading to derepression of the SOS regulon and eventually DNA repair. The protein is LexA repressor of Anaeromyxobacter dehalogenans (strain 2CP-1 / ATCC BAA-258).